The chain runs to 325 residues: Tagatose 1,6-diphosphate aldolase 1 (325 aa).

Belongs to the aldolase LacD family.

The catalysed reaction is D-tagatofuranose 1,6-bisphosphate = D-glyceraldehyde 3-phosphate + dihydroxyacetone phosphate. The protein operates within carbohydrate metabolism; D-tagatose 6-phosphate degradation; D-glyceraldehyde 3-phosphate and glycerone phosphate from D-tagatose 6-phosphate: step 2/2. This is Tagatose 1,6-diphosphate aldolase 1 (lacD1) from Streptococcus mutans serotype c (strain ATCC 700610 / UA159).